Here is a 1383-residue protein sequence, read N- to C-terminus: MYATDSRGHSPAFLQPQNGNSRHPSGYVPGKVVPLRPPPPPKSQASAKFTSIRREDRATFAFSPEEQQAQRESQKQKRHKNTFICFAITSFSFFIALAIILGISSKYAPDENCPDQNPRLRNWDPGQDSAKQVVIKEGDMLRLTSDATVHSIVIQDGGLLVFGDNKDGSRNITLRTHYILIQDGGALHIGAEKCRYKSKATITLYGKSDEGESMPTFGKKFIGVEAGGTLELHGARKASWTLLARTLNSSGLPFGSYTFEKDFSRGLNVRVIDQDTAKILESERFDTHEYRNESRRLQEFLRFQDPGRIVAIAVGDSAAKSLLQGTIQMIQERLGSELIQGLGYRQAWALVGVIDGGSTSCNESVRNYENHSSGGKALAQREFYTVDGQKFSVTAYSEWIEGVSLSGFRVEVVDGVKLNLLDDVSSWKPGDQIVVASTDYSMYQAEEFTLLPCSECSHFQVKVKETPQFLHMGEIIDGVDMRAEVGILTRNIVIQGEVEDSCYAENQCQFFDYDTFGGHIMIMKNFTSVHLSYVELKHMGQQQMGRYPVHFHLCGDVDYKGGYRHATFVDGLSIHHSFSRCITVHGTNGLLIKDTIGFDTLGHCFFLEDGIEQRNTLFHNLGLLTKPGTLLPTDRNNSMCTTMRDKVFGNYIPVPATDCMAVSTFWIAHPNNNLINNAAAGSQDAGIWYLFHKEPTGESSGLQLLAKPELTPLGIFYNNRVHSNFKAGLFIDKGVKTTNSSAADPREYLCLDNSARFRPHQDANPEKPRVAALIDRLIAFKNNDNGAWVRGGDIIVQNSAFADNGIGLTFASDGSFPSDEGSSQEVSESLFVGESRNYGFQGGQNKYVGTGGIDQKPRTLPRNRTFPIRGFQIYDGPIHLTRSTFKKYVPTPDRYSSAIGFLMKNSWQITPRNNISLVKFGPHVSLNVFFGKPGPWFEDCEMDGDKNSIFHDIDGSVTGYKDAYVGRMDNYLIRHPSCVNVSKWNAVICSGTYAQVYVQTWSTQNLSMTITRDEYPSNPMVLRGINQKAAFPQYQPVVMLEKGYTIHWNGPAPRTTFLYLVNFNKNDWIRVGLCYPSNTSFQVTFGYLQRQNGSLSKIEEYEPVHSLEELQRKQSERKFYFDSSTGLLFLYLKAKSHRHGHSYCSSQGCERVKIQAATDSKDISNCMAKAYPQYYRKPSVVKRMPAMLTGLCQGCGTRQVVFTSDPHKSYLPVQFQSPDKAETQRGDPSVISVNGTDFTFRSAGVLLLVVDPCSVPFRLTEKTVFPLADVSRIEEYLKTGIPPRSIVLLSTRGEIKQLNISHLLVPLGLAKPAHLYDKGSTIFLGFSGNFKPSWTKLFTSPAGQGLGVLEQFIPLQLDEYGCPRATTVRRRDLELLKQASKAH.

A disordered region spans residues 1–50; the sequence is MYATDSRGHSPAFLQPQNGNSRHPSGYVPGKVVPLRPPPPPKSQASAKFT. The Cytoplasmic portion of the chain corresponds to 1–82; the sequence is MYATDSRGHS…SQKQKRHKNT (82 aa). Ser-10 and Ser-63 each carry phosphoserine. Residues 83–103 traverse the membrane as a helical; Signal-anchor for type II membrane protein segment; it reads FICFAITSFSFFIALAIILGI. The Extracellular segment spans residues 104–1383; sequence SSKYAPDENC…ELLKQASKAH (1280 aa). The G8 domain occupies 121 to 245; it reads RNWDPGQDSA…RKASWTLLAR (125 aa). 2 N-linked (GlcNAc...) asparagine glycosylation sites follow: Asn-248 and Asn-292. A GG-type lectin 1 domain is found at 255–412; the sequence is GSYTFEKDFS…VSLSGFRVEV (158 aa). PbH1 repeat units follow at residues 669-691, 711-733, and 791-812; these read HPNN…WYLF, TPLG…FIDK, and GGDI…TFAS. 2 N-linked (GlcNAc...) asparagine glycosylation sites follow: Asn-914 and Asn-1234. The GG-type lectin 2 domain maps to 1208-1366; the sequence is KSYLPVQFQS…LDEYGCPRAT (159 aa).

Belongs to the CEMIP family. Widely expressed.

It localises to the cell membrane. It catalyses the reaction Random hydrolysis of (1-&gt;4)-linkages between N-acetyl-beta-D-glucosamine and D-glucuronate residues in hyaluronate.. Cell surface hyaluronidase that mediates the initial cleavage of extracellular high-molecular-weight hyaluronan into intermediate-size hyaluronan of approximately 10-5 kDa fragments. Very specific to hyaluronan; not able to cleave chondroitin sulfate or dermatan sulfate. Has an essential function in systemic hyaluronan catabolism and turnover and regulates cell adhesion and migration via hyaluronan degradation at focal adhesion sites. Acts as a regulator of angiogenesis and heart morphogenesis by mediating degradation of extracellular hyaluronan, thereby regulating VEGF signaling. In Homo sapiens (Human), this protein is Cell surface hyaluronidase CEMIP2.